Here is a 130-residue protein sequence, read N- to C-terminus: Mediator of RNA polymerase II transcription subunit 10 (130 aa).

This sequence belongs to the Mediator complex subunit 10 family. Component of the Mediator complex.

It is found in the nucleus. Its function is as follows. Component of the Mediator complex, a coactivator involved in the regulated transcription of nearly all RNA polymerase II-dependent genes. Mediator functions as a bridge to convey information from gene-specific regulatory proteins to the basal RNA polymerase II transcription machinery. Mediator is recruited to promoters by direct interactions with regulatory proteins and serves as a scaffold for the assembly of a functional preinitiation complex with RNA polymerase II and the general transcription factors. In Anopheles gambiae (African malaria mosquito), this protein is Mediator of RNA polymerase II transcription subunit 10 (MED10).